A 137-amino-acid chain; its full sequence is Transcription antitermination protein NusB (137 aa).

This sequence belongs to the NusB family.

Involved in transcription antitermination. Required for transcription of ribosomal RNA (rRNA) genes. Binds specifically to the boxA antiterminator sequence of the ribosomal RNA (rrn) operons. In Haemophilus ducreyi (strain 35000HP / ATCC 700724), this protein is Transcription antitermination protein NusB.